Consider the following 108-residue polypeptide: Iron-sulfur cluster assembly protein CyaY (108 aa).

The protein belongs to the frataxin family.

In terms of biological role, involved in iron-sulfur (Fe-S) cluster assembly. May act as a regulator of Fe-S biogenesis. In Burkholderia vietnamiensis (strain G4 / LMG 22486) (Burkholderia cepacia (strain R1808)), this protein is Iron-sulfur cluster assembly protein CyaY.